A 181-amino-acid polypeptide reads, in one-letter code: Large ribosomal subunit protein uL6m (181 aa).

This sequence belongs to the universal ribosomal protein uL6 family.

It localises to the mitochondrion. This Acanthamoeba castellanii (Amoeba) protein is Large ribosomal subunit protein uL6m (RPL6).